The primary structure comprises 605 residues: UPF0313 protein GSU2873 (605 aa).

In terms of domain architecture, Radical SAM core spans 291–561 (AYEQIRASVT…LQKALLLWHL (271 aa)). Cys-305, Cys-309, and Cys-312 together coordinate [4Fe-4S] cluster. The segment at 586–605 (GGAAGGGGGRSGSGFRPGRT) is disordered. The segment covering 587–597 (GAAGGGGGRSG) has biased composition (gly residues).

The protein belongs to the UPF0313 family. [4Fe-4S] cluster serves as cofactor.

This Geobacter sulfurreducens (strain ATCC 51573 / DSM 12127 / PCA) protein is UPF0313 protein GSU2873.